Reading from the N-terminus, the 211-residue chain is MFRNSYIQQNSDIQAAGGLVPMVVEQSARGERAYDIYSRLLKERVIFLVGPVEDYMANLICAQLLFLEAENPDKDIHLYINSPGGSVTAGMSIYDTMQFIKPNVSTTCIGQACSMGAFLLTAGAPGKRFCLPNSRVMIHQPLGGFQGQASDIEIHAKEILFIRERLNTLMAKHSGRTLEEIERDTNRDNFMSAEAAREYGLIDEVINQRPA.

The Nucleophile role is filled by serine 114. The active site involves histidine 139.

This sequence belongs to the peptidase S14 family. Fourteen ClpP subunits assemble into 2 heptameric rings which stack back to back to give a disk-like structure with a central cavity, resembling the structure of eukaryotic proteasomes.

It localises to the cytoplasm. It catalyses the reaction Hydrolysis of proteins to small peptides in the presence of ATP and magnesium. alpha-casein is the usual test substrate. In the absence of ATP, only oligopeptides shorter than five residues are hydrolyzed (such as succinyl-Leu-Tyr-|-NHMec, and Leu-Tyr-Leu-|-Tyr-Trp, in which cleavage of the -Tyr-|-Leu- and -Tyr-|-Trp bonds also occurs).. In terms of biological role, cleaves peptides in various proteins in a process that requires ATP hydrolysis. Has a chymotrypsin-like activity. Plays a major role in the degradation of misfolded proteins. The sequence is that of ATP-dependent Clp protease proteolytic subunit from Pseudomonas fluorescens (strain ATCC BAA-477 / NRRL B-23932 / Pf-5).